The sequence spans 298 residues: MHSSKARYLVFFQYYGTKYSGVMETPITQSVLGVQNYLEVAAQKLRPVGTIKFFISSRTDSGVHAICNLAHVDIERAKGKPPFTEEILVQAMNHHLQPEPIRLLKAIRVCDNFHARHNALSRTYVYRVAAGCSRPELPVFEGNLCWAIQDGLNVTAINEASKMLLGTHNFSAFRSANSENAFKSPIKTLQQADINPSCGILTHHWQSRNLQFWDFTFRARSFLYKQVRRMTGALVAVGQGRLTPQQIKEFLENQDPNCFLGNFVAPPHGLFLKDVEYDGTELNGFSAEETQKYSSHLN.

Catalysis depends on aspartate 60, which acts as the Nucleophile. Tyrosine 124 lines the substrate pocket.

The protein belongs to the tRNA pseudouridine synthase TruA family.

The catalysed reaction is a uridine in tRNA = a pseudouridine in tRNA. The sequence is that of tRNA pseudouridine synthase-like 1 (pusl1) from Xenopus laevis (African clawed frog).